The primary structure comprises 245 residues: Biosynthetic peptidoglycan transglycosylase (245 aa).

Residues 19–41 (CLRWVLAAPLLFAAASVLQVLFL) traverse the membrane as a helical segment.

This sequence belongs to the glycosyltransferase 51 family.

The protein localises to the cell inner membrane. The enzyme catalyses [GlcNAc-(1-&gt;4)-Mur2Ac(oyl-L-Ala-gamma-D-Glu-L-Lys-D-Ala-D-Ala)](n)-di-trans,octa-cis-undecaprenyl diphosphate + beta-D-GlcNAc-(1-&gt;4)-Mur2Ac(oyl-L-Ala-gamma-D-Glu-L-Lys-D-Ala-D-Ala)-di-trans,octa-cis-undecaprenyl diphosphate = [GlcNAc-(1-&gt;4)-Mur2Ac(oyl-L-Ala-gamma-D-Glu-L-Lys-D-Ala-D-Ala)](n+1)-di-trans,octa-cis-undecaprenyl diphosphate + di-trans,octa-cis-undecaprenyl diphosphate + H(+). It functions in the pathway cell wall biogenesis; peptidoglycan biosynthesis. Its function is as follows. Peptidoglycan polymerase that catalyzes glycan chain elongation from lipid-linked precursors. In Xanthomonas oryzae pv. oryzae (strain KACC10331 / KXO85), this protein is Biosynthetic peptidoglycan transglycosylase.